The primary structure comprises 312 residues: Glyoxylate/hydroxypyruvate reductase A (312 aa).

The active site involves arginine 227. Histidine 275 (proton donor) is an active-site residue.

This sequence belongs to the D-isomer specific 2-hydroxyacid dehydrogenase family. GhrA subfamily.

The protein localises to the cytoplasm. The enzyme catalyses glycolate + NADP(+) = glyoxylate + NADPH + H(+). It carries out the reaction (R)-glycerate + NAD(+) = 3-hydroxypyruvate + NADH + H(+). The catalysed reaction is (R)-glycerate + NADP(+) = 3-hydroxypyruvate + NADPH + H(+). Catalyzes the NADPH-dependent reduction of glyoxylate and hydroxypyruvate into glycolate and glycerate, respectively. In Klebsiella pneumoniae (strain 342), this protein is Glyoxylate/hydroxypyruvate reductase A.